We begin with the raw amino-acid sequence, 122 residues long: MASTVAGLSMSAESLRLPLLIGVSSGMLSVSDAEVLPSFLFKSGFSVLQSAALDTDDDLARGLSLLDLLPLVLLSPFFEEDVDEEEAGDVEGLDGFVFVFRLLLPLYNQSTGTSNSVLVIIT.

The signal sequence occupies residues M1–A33.

This is an uncharacterized protein from Saccharomyces cerevisiae (strain ATCC 204508 / S288c) (Baker's yeast).